Reading from the N-terminus, the 216-residue chain is Probable methylthioribulose-1-phosphate dehydratase (216 aa).

Cys87 contributes to the substrate binding site. His105 and His107 together coordinate Zn(2+). Residue Glu129 is the Proton donor/acceptor of the active site.

This sequence belongs to the aldolase class II family. MtnB subfamily. Zn(2+) is required as a cofactor.

It is found in the cytoplasm. The catalysed reaction is 5-(methylsulfanyl)-D-ribulose 1-phosphate = 5-methylsulfanyl-2,3-dioxopentyl phosphate + H2O. Its pathway is amino-acid biosynthesis; L-methionine biosynthesis via salvage pathway; L-methionine from S-methyl-5-thio-alpha-D-ribose 1-phosphate: step 2/6. Its function is as follows. Catalyzes the dehydration of methylthioribulose-1-phosphate (MTRu-1-P) into 2,3-diketo-5-methylthiopentyl-1-phosphate (DK-MTP-1-P). This chain is Probable methylthioribulose-1-phosphate dehydratase, found in Drosophila persimilis (Fruit fly).